The primary structure comprises 166 residues: Putative universal stress protein SE_1385 (166 aa).

It belongs to the universal stress protein A family.

Its subcellular location is the cytoplasm. In Staphylococcus epidermidis (strain ATCC 12228 / FDA PCI 1200), this protein is Putative universal stress protein SE_1385.